A 128-amino-acid chain; its full sequence is Transcription antitermination protein NusB (128 aa).

Belongs to the NusB family.

In terms of biological role, involved in transcription antitermination. Required for transcription of ribosomal RNA (rRNA) genes. Binds specifically to the boxA antiterminator sequence of the ribosomal RNA (rrn) operons. The sequence is that of Transcription antitermination protein NusB from Listeria monocytogenes serotype 4b (strain CLIP80459).